The following is a 215-amino-acid chain: Adenylate kinase (215 aa).

ATP is bound at residue 10–15 (GAGKGT). Positions 30–59 (STGDILRANVREGTELGLAAKEYMDKGELV) are NMP. AMP-binding positions include threonine 31, arginine 36, 57–59 (ELV), 85–88 (GYPR), and glutamine 92. Positions 126–162 (GRLMCNCGASYHRTFNPPKKDDVCDICGGKVFQRADD) are LID. Arginine 127 serves as a coordination point for ATP. Zn(2+) is bound by residues cysteine 130 and cysteine 132. Position 135 to 136 (135 to 136 (SY)) interacts with ATP. Zn(2+) is bound by residues cysteine 149 and cysteine 152. The AMP site is built by arginine 159 and arginine 170. An ATP-binding site is contributed by lysine 198.

It belongs to the adenylate kinase family. In terms of assembly, monomer.

It is found in the cytoplasm. The enzyme catalyses AMP + ATP = 2 ADP. It participates in purine metabolism; AMP biosynthesis via salvage pathway; AMP from ADP: step 1/1. Functionally, catalyzes the reversible transfer of the terminal phosphate group between ATP and AMP. Plays an important role in cellular energy homeostasis and in adenine nucleotide metabolism. The sequence is that of Adenylate kinase from Methanosarcina barkeri (strain Fusaro / DSM 804).